A 449-amino-acid polypeptide reads, in one-letter code: Phosphoglucosamine mutase (449 aa).

Residue Ser-101 is the Phosphoserine intermediate of the active site. Residues Ser-101, Asp-240, Asp-242, and Asp-244 each contribute to the Mg(2+) site. The residue at position 101 (Ser-101) is a Phosphoserine.

Belongs to the phosphohexose mutase family. Mg(2+) serves as cofactor. In terms of processing, activated by phosphorylation.

The enzyme catalyses alpha-D-glucosamine 1-phosphate = D-glucosamine 6-phosphate. In terms of biological role, catalyzes the conversion of glucosamine-6-phosphate to glucosamine-1-phosphate. The polypeptide is Phosphoglucosamine mutase (Streptococcus mutans serotype c (strain ATCC 700610 / UA159)).